Consider the following 191-residue polypeptide: Gene BABR protein 1 (191 aa).

The polypeptide is Gene BABR protein 1 (Babesia bovis).